The following is a 239-amino-acid chain: Exosome complex component Rrp41 (239 aa).

Residues 1-21 (MEERPERLISEDGLRLDGRKP) form a disordered region.

This sequence belongs to the RNase PH family. Rrp41 subfamily. As to quaternary structure, component of the archaeal exosome complex. Forms a hexameric ring-like arrangement composed of 3 Rrp41-Rrp42 heterodimers. The hexameric ring associates with a trimer of Rrp4 and/or Csl4 subunits.

The protein localises to the cytoplasm. Its function is as follows. Catalytic component of the exosome, which is a complex involved in RNA degradation. Has 3'-&gt;5' exoribonuclease activity. Can also synthesize heteromeric RNA-tails. The sequence is that of Exosome complex component Rrp41 from Methanopyrus kandleri (strain AV19 / DSM 6324 / JCM 9639 / NBRC 100938).